A 370-amino-acid chain; its full sequence is 3-isopropylmalate dehydrogenase (370 aa).

NAD(+) is bound at residue Gly-77–Glu-90. Residues Arg-97, Arg-107, Arg-135, and Asp-226 each coordinate substrate. The Mg(2+) site is built by Asp-226, Asp-250, and Asp-254. NAD(+) is bound at residue Gly-290–Asn-302.

Belongs to the isocitrate and isopropylmalate dehydrogenases family. LeuB type 1 subfamily. As to quaternary structure, homodimer. It depends on Mg(2+) as a cofactor. Mn(2+) is required as a cofactor.

Its subcellular location is the cytoplasm. It carries out the reaction (2R,3S)-3-isopropylmalate + NAD(+) = 4-methyl-2-oxopentanoate + CO2 + NADH. The protein operates within amino-acid biosynthesis; L-leucine biosynthesis; L-leucine from 3-methyl-2-oxobutanoate: step 3/4. Its function is as follows. Catalyzes the oxidation of 3-carboxy-2-hydroxy-4-methylpentanoate (3-isopropylmalate) to 3-carboxy-4-methyl-2-oxopentanoate. The product decarboxylates to 4-methyl-2 oxopentanoate. This is 3-isopropylmalate dehydrogenase from Nitrobacter winogradskyi (strain ATCC 25391 / DSM 10237 / CIP 104748 / NCIMB 11846 / Nb-255).